Consider the following 222-residue polypeptide: 26S proteasome non-ATPase regulatory subunit 9 (222 aa).

The 87-residue stretch at 108–194 folds into the PDZ domain; it reads QARDMAEARE…KPLNVMVIRR (87 aa). S128 is modified (phosphoserine).

It belongs to the proteasome subunit p27 family. Interacts with PSMC3. Part of a transient complex (modulator) containing PSMD9, PSMC6 and PSMC3 formed during the assembly of the 26S proteasome.

Its function is as follows. Acts as a chaperone during the assembly of the 26S proteasome, specifically of the base subcomplex of the PA700/19S regulatory complex (RC). During the base subcomplex assembly is part of an intermediate PSMD9:PSMC6:PSMC3 module, also known as modulator trimer complex; PSMD9 is released during the further base assembly process. The polypeptide is 26S proteasome non-ATPase regulatory subunit 9 (Psmd9) (Rattus norvegicus (Rat)).